A 609-amino-acid polypeptide reads, in one-letter code: Chaperone protein DnaK (609 aa).

T173 is modified (phosphothreonine; by autocatalysis). Residues 580 to 609 (QAAQGGGAEGQEPKKDNVVDADYEVVDDKK) are disordered. Over residues 598 to 609 (VDADYEVVDDKK) the composition is skewed to acidic residues.

Belongs to the heat shock protein 70 family.

Its function is as follows. Acts as a chaperone. The chain is Chaperone protein DnaK from Brevibacillus brevis (strain 47 / JCM 6285 / NBRC 100599).